The primary structure comprises 418 residues: Transcription termination factor Rho (418 aa).

Residues 48-123 (DIYGDGVLEI…LKVNDINFDR (76 aa)) enclose the Rho RNA-BD domain. ATP contacts are provided by residues 169-174 (GKGQRG), 181-186 (KAGKTM), and Arg212.

The protein belongs to the Rho family. Homohexamer. The homohexamer assembles into an open ring structure.

Its function is as follows. Facilitates transcription termination by a mechanism that involves Rho binding to the nascent RNA, activation of Rho's RNA-dependent ATPase activity, and release of the mRNA from the DNA template. The protein is Transcription termination factor Rho of Allochromatium vinosum (strain ATCC 17899 / DSM 180 / NBRC 103801 / NCIMB 10441 / D) (Chromatium vinosum).